Reading from the N-terminus, the 165-residue chain is MNPESVRIYLVAAMGANRVIGNGPDIPWKIPGEQKIFRRLTESKVVVMGRKTFESIGKPLPNRHTVVLSRQAGYSAPGCAVVSTLSHVSPSTAEHGKELYVARGAEVYALALPHANGVFLSEVHQTFEGDAFFPVLNAAEFEVVSSETIQGTITYTHSVYARRNG.

A DHFR domain is found at 7 to 162 (RIYLVAAMGA…ITYTHSVYAR (156 aa)).

The protein belongs to the dihydrofolate reductase family. In terms of assembly, homodimer.

It catalyses the reaction (6S)-5,6,7,8-tetrahydrofolate + NADP(+) = 7,8-dihydrofolate + NADPH + H(+). Its pathway is cofactor biosynthesis; tetrahydrofolate biosynthesis; 5,6,7,8-tetrahydrofolate from 7,8-dihydrofolate: step 1/1. Its function is as follows. Key enzyme in folate metabolism. Catalyzes an essential reaction for de novo glycine and purine synthesis, and for DNA precursor synthesis. This is Dihydrofolate reductase type A13 (dfrA13) from Escherichia coli.